The sequence spans 469 residues: Calcium-binding mitochondrial carrier protein SCaMC-2 (469 aa).

Residues 1–189 (MLCLCLYVPL…ERQTGMWWRH (189 aa)) lie on the Mitochondrial intermembrane side of the membrane. EF-hand domains lie at 47–80 (TYRQ…QDHE), 78–113 (DHEK…LGVK), and 114–149 (ISEQ…HPVE). Residues Asp-60, Asp-62, Asp-64, Gln-66, and Glu-71 each contribute to the Ca(2+) site. Solcar repeat units lie at residues 184 to 270 (GMWW…IKRL), 278 to 363 (LRIH…LKNA), and 375 to 463 (PGVF…LKIT). Residues 190–207 (LVAGGGAGAVSRTCTAPL) form a helical membrane-spanning segment. Topologically, residues 208–244 (DRLKVLMQVHASRSNNMCIVGGFTQMIREGGARSLWR) are mitochondrial matrix. Residues 245–264 (GNGINVLKIAPESAIKFMAY) traverse the membrane as a helical segment. Topologically, residues 265–287 (EQIKRLIGSDQETLRIHERLVAG) are mitochondrial intermembrane. The helical transmembrane segment at 288-301 (SLAGAIAQSSIYPM) threads the bilayer. The Mitochondrial matrix portion of the chain corresponds to 302–337 (EVLKTRMALRKTGQYSGMLDCARKILAREGMAAFYK). A helical transmembrane segment spans residues 338–357 (GYVPNMLGIIPYAGIDLAVY). The Mitochondrial intermembrane portion of the chain corresponds to 358 to 380 (ETLKNAWLQRYAVNSADPGVFVL). A helical membrane pass occupies residues 381–398 (LACGTMSSTCGQLASYPL). The Mitochondrial matrix portion of the chain corresponds to 399 to 437 (ALVRTRMQAQASMEGAPEVTMSSLFKQILRTEGAFGLYR). A helical transmembrane segment spans residues 438–457 (GLAPNFMKVIPAVSISYVVY). At 458 to 469 (ENLKITLGVQSR) the chain is on the mitochondrial intermembrane side.

Belongs to the mitochondrial carrier (TC 2.A.29) family.

It is found in the mitochondrion inner membrane. Its function is as follows. Calcium-dependent mitochondrial solute carrier. Mitochondrial solute carriers shuttle metabolites, nucleotides, and cofactors through the mitochondrial inner membrane. May act as a ATP-Mg/Pi exchanger that mediates the transport of Mg-ATP in exchange for phosphate, catalyzing the net uptake or efflux of adenine nucleotides into or from the mitochondria. The chain is Calcium-binding mitochondrial carrier protein SCaMC-2 (SLC25A25) from Bos taurus (Bovine).